Consider the following 444-residue polypeptide: MKLRFAPSPTGYLHVGNARLAVANFLFARHNGAKFLLRIDDTDTTRGKPEYEEAIGKDLSWLGLKWDEYVRQSERLDRYAEVIEKLKASGRLYPCFETEYELNAKREARIRAGKAPIYDRAMLKLTADQRARAEANGKTPHWRFRLSDGSRKWQDLVMDECSVKLTAISDPVLVRGDGTILYTLASVIDDLDMGITHIVRGEDHVTNTGVQIDIAEALGAKPDHFTFAHLPLLLDSDGGKLSKRFDSLALKSLRQDGLEPMSIVSYLARVGSSDDPQVMTMDEAIAAYDISHVSKSAARFDMTQLLALNRRALHNLPFEDAKIHLPPEADETFWHAVRGNVDLSAEIPHWWDVVHGTIIPPSQPEDRAFLQHALDTLPAEPWGEETWKDWTNALKEQSGRKGRSLFMPLRLALTGEDAGPELHVLLGLMGRERTVARLRDAIQA.

The 'HIGH' region signature appears at 7–17 (PSPTGYLHVGN). The short motif at 240–244 (KLSKR) is the 'KMSKS' region element. Lysine 243 contributes to the ATP binding site.

Belongs to the class-I aminoacyl-tRNA synthetase family. Glutamate--tRNA ligase type 1 subfamily. In terms of assembly, monomer.

Its subcellular location is the cytoplasm. The catalysed reaction is tRNA(Glu) + L-glutamate + ATP = L-glutamyl-tRNA(Glu) + AMP + diphosphate. In terms of biological role, catalyzes the attachment of glutamate to tRNA(Glu) in a two-step reaction: glutamate is first activated by ATP to form Glu-AMP and then transferred to the acceptor end of tRNA(Glu). This is Glutamate--tRNA ligase 2 from Gluconobacter oxydans (strain 621H) (Gluconobacter suboxydans).